A 493-amino-acid polypeptide reads, in one-letter code: Protein kinase PINOID 2 (493 aa).

Residues 1 to 53 (MAAIKEESDYDSSRSSLTAPDSRRSWISDIGSSSSVSARSFGGDTPASSCRYK) are disordered. Residues 27-44 (ISDIGSSSSVSARSFGGD) are compositionally biased toward low complexity. In terms of domain architecture, Protein kinase spans 80–443 (FRLVRRLGSG…SAEVKRHPFF (364 aa)). Residues 86–94 (LGSGDLGNV) and Lys-120 contribute to the ATP site. Asp-216 functions as the Proton acceptor in the catalytic mechanism. Positions 295–306 (GGGAAAGNNGDG) are enriched in gly residues. Disordered stretches follow at residues 295 to 320 (GGGA…TAEP) and 458 to 493 (EVPA…FDYF). Positions 307–319 (DGNDEEAETETAE) are enriched in acidic residues. Residues 444 to 493 (KGVNWALVRSVRPPEVPAPPAPAPKKVMTMSKKERQEPYNYRPENHFDYF) form the AGC-kinase C-terminal domain. The segment covering 474 to 493 (SKKERQEPYNYRPENHFDYF) has biased composition (basic and acidic residues).

This sequence belongs to the protein kinase superfamily. Ser/Thr protein kinase family.

It catalyses the reaction L-seryl-[protein] + ATP = O-phospho-L-seryl-[protein] + ADP + H(+). It carries out the reaction L-threonyl-[protein] + ATP = O-phospho-L-threonyl-[protein] + ADP + H(+). Functionally, serine/threonine-protein kinase involved in the regulation of auxin signaling. This chain is Protein kinase PINOID 2 (PID2), found in Oryza sativa subsp. japonica (Rice).